A 68-amino-acid polypeptide reads, in one-letter code: uncharacterized protein (68 aa).

This is an uncharacterized protein from Homo sapiens (Human).